The following is a 179-amino-acid chain: Bifunctional protein PyrR (179 aa).

Residues 39 to 40 (RR), 101 to 109 (DDVLFTGRT), R134, and V158 contribute to the substrate site. Residues 97 to 109 (VILIDDVLFTGRT) carry the PRPP-binding motif.

This sequence belongs to the purine/pyrimidine phosphoribosyltransferase family. PyrR subfamily.

The enzyme catalyses UMP + diphosphate = 5-phospho-alpha-D-ribose 1-diphosphate + uracil. Its function is as follows. Regulates the transcription of the pyrimidine nucleotide (pyr) operon in response to exogenous pyrimidines. Also displays a weak uracil phosphoribosyltransferase activity which is not physiologically significant. The protein is Bifunctional protein PyrR of Haemophilus ducreyi (strain 35000HP / ATCC 700724).